A 283-amino-acid polypeptide reads, in one-letter code: Nucleoid occlusion protein (283 aa).

Residues Met1–Glu26 form a disordered region. Residues Asp13–Glu26 are compositionally biased toward basic and acidic residues. A DNA-binding region (H-T-H motif) is located at residues Glu143–Leu162.

The protein belongs to the ParB family.

It localises to the cytoplasm. It is found in the nucleoid. Its function is as follows. Effects nucleoid occlusion by binding relatively nonspecifically to DNA and preventing the assembly of the division machinery in the vicinity of the nucleoid, especially under conditions that disturb the cell cycle. It helps to coordinate cell division and chromosome segregation by preventing the formation of the Z ring through the nucleoid, which would cause chromosome breakage. In Halalkalibacterium halodurans (strain ATCC BAA-125 / DSM 18197 / FERM 7344 / JCM 9153 / C-125) (Bacillus halodurans), this protein is Nucleoid occlusion protein.